The sequence spans 505 residues: Maturase K (505 aa).

It belongs to the intron maturase 2 family. MatK subfamily.

Its subcellular location is the plastid. The protein localises to the chloroplast. Its function is as follows. Usually encoded in the trnK tRNA gene intron. Probably assists in splicing its own and other chloroplast group II introns. In Morus alba (White mulberry), this protein is Maturase K.